The primary structure comprises 381 residues: PqqA peptide cyclase (381 aa).

The region spanning 12-228 (VGPPLWLLAE…AEYRQRLAAE (217 aa)) is the Radical SAM core domain. 3 residues coordinate [4Fe-4S] cluster: Cys26, Cys30, and Cys33.

It belongs to the radical SAM superfamily. PqqE family. As to quaternary structure, interacts with PqqD. The interaction is necessary for activity of PqqE. The cofactor is [4Fe-4S] cluster.

It carries out the reaction [PQQ precursor protein] + S-adenosyl-L-methionine = E-Y cross-linked-[PQQ precursor protein] + 5'-deoxyadenosine + L-methionine + H(+). The protein operates within cofactor biosynthesis; pyrroloquinoline quinone biosynthesis. Its function is as follows. Catalyzes the cross-linking of a glutamate residue and a tyrosine residue in the PqqA protein as part of the biosynthesis of pyrroloquinoline quinone (PQQ). In Pseudomonas aeruginosa (strain LESB58), this protein is PqqA peptide cyclase.